Here is a 352-residue protein sequence, read N- to C-terminus: D-alanine--D-alanine ligase A (352 aa).

The ATP-grasp domain occupies 138–341 (KRMVQSAGLV…PPKLVGALVE (204 aa)). 165 to 220 (ECLGSSTLFVKPATSGSSIGVSRVSNALEYAAAFAIAAREDTKVLVEAAVCGREIE) serves as a coordination point for ATP. Asp295, Glu308, and Asn310 together coordinate Mg(2+).

The protein belongs to the D-alanine--D-alanine ligase family. Mg(2+) serves as cofactor. Requires Mn(2+) as cofactor.

It is found in the cytoplasm. It catalyses the reaction 2 D-alanine + ATP = D-alanyl-D-alanine + ADP + phosphate + H(+). It functions in the pathway cell wall biogenesis; peptidoglycan biosynthesis. Its function is as follows. Cell wall formation. The protein is D-alanine--D-alanine ligase A of Pseudomonas putida (strain ATCC 47054 / DSM 6125 / CFBP 8728 / NCIMB 11950 / KT2440).